We begin with the raw amino-acid sequence, 496 residues long: Serine/threonine-protein kinase Sgk3 (496 aa).

The 113-residue stretch at 12–124 (SCPSVSIPSS…AFLQMDSPRH (113 aa)) folds into the PX domain. Residues 121 to 157 (SPRHQSDPSEDEDERSTPKPHSTSRNINLGPTGNPHA) form a disordered region. Residues S126 and S129 each carry the phosphoserine modification. A compositionally biased stretch (polar residues) spans 139 to 151 (KPHSTSRNINLGP). Residues 162–464 (FDFLKVIGKG…EETVPYSVCV (303 aa)) enclose the Protein kinase domain. ATP contacts are provided by residues 168–176 (IGKGSFGKV) and K191. A Nuclear localization signal motif is present at residues 195-205 (KKIVLNRKEQK). The active-site Proton acceptor is D286. T320 carries the post-translational modification Phosphothreonine; by PDPK1. One can recognise an AGC-kinase C-terminal domain in the interval 420–496 (ESLSWTDLVQ…YAPPSEDLFL (77 aa)). Residue S486 is modified to Phosphoserine.

Belongs to the protein kinase superfamily. AGC Ser/Thr protein kinase family. In terms of assembly, interacts with GSK3B and FLII. Interacts with PDPK1 in a phosphorylation-dependent manner. Activated by phosphorylation on Ser-486 by an unknown kinase (may be mTORC2 but not confirmed), transforming it into a substrate for PDPK1 which then phosphorylates it on Thr-320.

It localises to the cytoplasmic vesicle. The protein localises to the early endosome. It is found in the recycling endosome. The enzyme catalyses L-seryl-[protein] + ATP = O-phospho-L-seryl-[protein] + ADP + H(+). The catalysed reaction is L-threonyl-[protein] + ATP = O-phospho-L-threonyl-[protein] + ADP + H(+). With respect to regulation, two specific sites, one in the kinase domain (Thr-320) and the other in the C-terminal regulatory region (Ser-486), need to be phosphorylated for its full activation. In terms of biological role, serine/threonine-protein kinase which is involved in the regulation of a wide variety of ion channels, membrane transporters, cell growth, proliferation, survival and migration. Up-regulates Na(+) channels: SCNN1A/ENAC and SCN5A, K(+) channels: KCNA3/KV1.3, KCNE1, KCNQ1 and KCNH2/HERG, epithelial Ca(2+) channels: TRPV5 and TRPV6, chloride channel: BSND, creatine transporter: SLC6A8, Na(+)/dicarboxylate cotransporter: SLC13A2/NADC1, Na(+)-dependent phosphate cotransporter: SLC34A2/NAPI-2B, amino acid transporters: SLC1A5/ASCT2 and SLC6A19, glutamate transporters: SLC1A3/EAAT1, SLC1A6/EAAT4 and SLC1A7/EAAT5, glutamate receptors: GRIA1/GLUR1 and GRIK2/GLUR6, Na(+)/H(+) exchanger: SLC9A3/NHE3, and the Na(+)/K(+) ATPase. Plays a role in the regulation of renal tubular phosphate transport and bone density. Phosphorylates NEDD4L and GSK3B. Positively regulates ER transcription activity through phosphorylation of FLII. Negatively regulates the function of ITCH/AIP4 via its phosphorylation and thereby prevents CXCR4 from being efficiently sorted to lysosomes. The chain is Serine/threonine-protein kinase Sgk3 (Sgk3) from Rattus norvegicus (Rat).